A 436-amino-acid chain; its full sequence is Cytochrome b5-related protein (436 aa).

A Cytochrome b5 heme-binding domain is found at Pro16–Ala100. The heme site is built by His59 and His82.

As to expression, muscle.

In terms of biological role, may play a role in muscle cell metabolism. This Drosophila melanogaster (Fruit fly) protein is Cytochrome b5-related protein (Cyt-b5-r).